The sequence spans 525 residues: Bifunctional enzyme NanE/NanK (525 aa).

Positions 1 to 241 (MRGSPRNLCR…DAVESAAKPS (241 aa)) are manNAc-6-P epimerase. Positions 242–525 (SPVLAFDIGG…VADLAATYFS (284 aa)) are manNAc kinase. ATP is bound by residues 246-253 (AFDIGGTK) and 372-379 (GIGGGIVL).

It in the N-terminal section; belongs to the NanE family. In the C-terminal section; belongs to the ROK (NagC/XylR) family. NanK subfamily.

The catalysed reaction is an N-acyl-D-glucosamine 6-phosphate = an N-acyl-D-mannosamine 6-phosphate. It catalyses the reaction an N-acyl-D-mannosamine + ATP = an N-acyl-D-mannosamine 6-phosphate + ADP + H(+). It functions in the pathway amino-sugar metabolism; N-acetylneuraminate degradation; D-fructose 6-phosphate from N-acetylneuraminate: step 2/5. The protein operates within amino-sugar metabolism; N-acetylneuraminate degradation; D-fructose 6-phosphate from N-acetylneuraminate: step 3/5. Converts N-acetylmannosamine-6-phosphate (ManNAc-6-P) to N-acetylglucosamine-6-phosphate (GlcNAc-6-P). Functionally, catalyzes the phosphorylation of N-acetylmannosamine (ManNAc) to ManNAc-6-P. This Brucella suis biovar 1 (strain 1330) protein is Bifunctional enzyme NanE/NanK (nanEK).